The primary structure comprises 357 residues: 3-isopropylmalate dehydrogenase (357 aa).

Arginine 97, arginine 107, arginine 135, and aspartate 224 together coordinate substrate. Residues aspartate 224, aspartate 248, and aspartate 252 each contribute to the Mg(2+) site. NAD(+) is bound at residue 282 to 294 (GSAPDIAGQDKAN).

This sequence belongs to the isocitrate and isopropylmalate dehydrogenases family. LeuB type 1 subfamily. Homodimer. It depends on Mg(2+) as a cofactor. Mn(2+) is required as a cofactor.

It localises to the cytoplasm. The catalysed reaction is (2R,3S)-3-isopropylmalate + NAD(+) = 4-methyl-2-oxopentanoate + CO2 + NADH. It functions in the pathway amino-acid biosynthesis; L-leucine biosynthesis; L-leucine from 3-methyl-2-oxobutanoate: step 3/4. Functionally, catalyzes the oxidation of 3-carboxy-2-hydroxy-4-methylpentanoate (3-isopropylmalate) to 3-carboxy-4-methyl-2-oxopentanoate. The product decarboxylates to 4-methyl-2 oxopentanoate. The polypeptide is 3-isopropylmalate dehydrogenase (Parasynechococcus marenigrum (strain WH8102)).